We begin with the raw amino-acid sequence, 383 residues long: Guanine nucleotide-binding protein G(s) subunit alpha (383 aa).

The disordered stretch occupies residues M1 to T31. G2 carries the N-palmitoyl glycine lipid modification. C3 is lipidated: S-palmitoyl cysteine. Positions G8 to S17 are enriched in polar residues. Over residues E18–T31 the composition is skewed to basic and acidic residues. The 341-residue stretch at A43 to L383 folds into the G-alpha domain. A G1 motif region spans residues R46–T59. GTP-binding positions include G51–S58, L187–T193, D212–Q216, N281–D284, and A355. Mg(2+) is bound by residues S58 and T193. The segment at D185–T193 is G2 motif. A G3 motif region spans residues F208 to R217. The segment at I277–D284 is G4 motif. The G5 motif stretch occupies residues T353–T358.

It belongs to the G-alpha family. G(s) subfamily. G proteins are composed of 3 units; alpha, beta and gamma. The alpha chain contains the guanine nucleotide binding site.

Guanine nucleotide-binding proteins (G proteins) are involved as modulators or transducers in various transmembrane signaling systems. The G(s) protein is involved in hormonal regulation of adenylate cyclase: it activates the cyclase. Participates in olfactory signal transduction. The protein is Guanine nucleotide-binding protein G(s) subunit alpha of Anopheles gambiae (African malaria mosquito).